A 381-amino-acid chain; its full sequence is Neuropeptide Y receptor type 2 (381 aa).

A disordered region spans residues 1 to 37; that stretch reads MGPVGAEADENQTVEVKVEPYGPGHTTPRGELPPDPE. The Extracellular portion of the chain corresponds to 1–51; the sequence is MGPVGAEADENQTVEVKVEPYGPGHTTPRGELPPDPEPELIDSTKLVEVQV. Asn-11 is a glycosylation site (N-linked (GlcNAc...) asparagine). The chain crosses the membrane as a helical span at residues 52-72; the sequence is ILILAYCSIILLGVVGNSLVI. Residues 73–86 are Cytoplasmic-facing; the sequence is HVVIKFKSMRTVTN. Residues 87–107 form a helical membrane-spanning segment; the sequence is FFIANLAVADLLVNTLCLPFT. Over 108 to 124 the chain is Extracellular; sequence LTYTLMGEWKMGPVLCH. The cysteines at positions 123 and 203 are disulfide-linked. A helical membrane pass occupies residues 125-145; it reads LVPYAQGLAVQVSTITLTVIA. Topologically, residues 146-165 are cytoplasmic; it reads LDRHRCIVYHLESKISKRIS. Residues 166 to 186 form a helical membrane-spanning segment; it reads FLIIGLAWGISALLASPLAIF. Topologically, residues 187-216 are extracellular; the sequence is REYSLIEIIPDFEIVACTEKWPGEEKSVYG. The helical transmembrane segment at 217 to 237 threads the bilayer; that stretch reads TVYSLSTLLILYVLPLGIISF. Over 238 to 268 the chain is Cytoplasmic; it reads SYTRIWSKLRNHVSPGAASDHYHQRRHKMTK. A helical transmembrane segment spans residues 269–289; the sequence is MLVCVVVVFAVSWLPLHAFQL. Over 290-304 the chain is Extracellular; sequence AVDIDSHVLDLKEYK. The helical transmembrane segment at 305–325 threads the bilayer; sequence LIFTVFHIIAMCSTFANPLLY. Over 326–381 the chain is Cytoplasmic; it reads GWMNSNYRKAFLSAFRCEQRLDAIHSEVSMTFKAKKNLEVKKNNGPTDSFSEATNV. Cys-342 carries S-palmitoyl cysteine lipidation.

The protein belongs to the G-protein coupled receptor 1 family.

The protein resides in the cell membrane. In terms of biological role, receptor for neuropeptide Y and peptide YY. This chain is Neuropeptide Y receptor type 2 (Npy2r), found in Mus musculus (Mouse).